The chain runs to 1549 residues: Trichohyalin (1549 aa).

An S-100-like region spans residues 1 to 91 (MSPLLRSIFN…AAACYYALGQ (91 aa)). 2 consecutive EF-hand domains span residues 23-48 (CDGT…LRKP) and 49-84 (HDPE…VAAA). Positions 27, 32, 62, 64, 66, and 73 each coordinate Ca(2+). Disordered regions lie at residues 97–125 (EKEA…PQDR), 157–180 (LQRR…GREL), 262–359 (LRRK…KQEQ), and 404–448 (QREK…RQER). Basic and acidic residues-rich tracts occupy residues 171–180 (LQQRPKGREL), 262–278 (LRRK…RQEQ), and 317–335 (HRQE…ERQQ). Residues 336–348 (EQQISEEVQSLQE) are compositionally biased toward low complexity. The segment covering 349-359 (DQGRQRLKQEQ) has biased composition (basic and acidic residues). 14 tandem repeats follow at residues 413–448 (ERQY…RQER), 449–476 (EKQY…RQER), 477–504 (EKQY…RQER), 505–532 (ERQY…RQER), 533–560 (ERQY…RQER), 561–588 (EKQY…RQER), 589–616 (EKQY…RQER), 617–644 (ERQY…RQER), 645–678 (ERQY…RQER), 679–706 (ERQY…RQER), 707–742 (ERQY…RQVR), 743–771 (ERKY…DREK), 772–796 (RQYL…RQER), and 797–832 (ERQY…RQEL). The interval 413-832 (ERQYREVELQ…ECEKRRRQEL (420 aa)) is 14 X 28 AA approximate tandem repeats. 3 disordered regions span residues 782–803 (REEE…YREE), 839–942 (EELQ…RKFR), and 980–1000 (QLRQ…ERDR). Composition is skewed to basic and acidic residues over residues 850-884 (FRDD…DSWV), 895-918 (PLQD…KRDS), and 925-942 (LLER…RKFR). A run of 23 repeats spans residues 938 to 961 (DRKF…YLEE), 962 to 985 (DRKF…RQER), 986 to 1021 (DRKF…RQER), 1022 to 1044 (DRKF…RQER), 1045 to 1067 (DRKF…RQER), 1068 to 1090 (DRKF…LRQE), 1091 to 1121 (RNRK…RQKR), 1122 to 1144 (DRKF…RQER), 1145 to 1167 (DRKF…RQER), 1168 to 1197 (DRKF…RQER), 1198 to 1227 (DRKF…RQER), 1228 to 1250 (DRKF…RQER), 1251 to 1273 (DRKF…RQER), 1274 to 1296 (DRKF…RQER), 1297 to 1319 (DRKF…RQER), 1320 to 1342 (DRKF…RQER), 1343 to 1368 (DRKF…ELEG), 1369 to 1391 (VFSQ…QRQR), 1392 to 1416 (DRKF…VQEQ), 1417 to 1439 (DRKF…RRRQ), 1440 to 1461 (QLDQ…RRQE), 1462 to 1484 (QELR…EEEQ), and 1485 to 1507 (LRRQ…SRRQ). Residues 938–1507 (DRKFREEEQL…ERDVQQSRRQ (570 aa)) form a 23 X 23 AA approximate tandem repeats region. Positions 1489–1523 (QQEEQKRRQERDVQQSRRQVWEEDKGRRQVLEAGK) are enriched in basic and acidic residues. Positions 1489 to 1549 (QQEEQKRRQE…IQEQRSQYRP (61 aa)) are disordered.

Belongs to the S100-fused protein family. As to quaternary structure, homodimer. Substrate of transglutaminase. Some 200 arginines are probably converted to citrullines by peptidylarginine deimidase. In terms of tissue distribution, found in the hard keratinizing tissues such as the inner root sheath (IRS) of hair follicles and medulla, and in the epithelia of the tongue, hoof and rumen.

Functionally, intermediate filament-associated protein that associates in regular arrays with keratin intermediate filaments (KIF) of the inner root sheath cells of the hair follicle and the granular layer of the epidermis. It later becomes cross-linked to KIF by isodipeptide bonds. It may serve as scaffold protein, together with involucrin, in the organization of the cell envelope or even anchor the cell envelope to the KIF network. It may be involved in its own calcium-dependent postsynthetic processing during terminal differentiation. This Ovis aries (Sheep) protein is Trichohyalin (TCHH).